An 83-amino-acid chain; its full sequence is U5-theraphotoxin-Hs1b 1 (83 aa).

A signal peptide spans 1–21; sequence MKTSMFLTLTGLVLLFVVCYA. The propeptide occupies 22-49; the sequence is SESEEKEFPKELLSSIFAADSDFKEEER. Cystine bridges form between Cys51-Cys63, Cys56-Cys68, and Cys62-Cys75.

It belongs to the neurotoxin 10 (Hwtx-1) family. 51 (Hntx-8) subfamily. Hntx-8 sub-subfamily. Expressed by the venom gland.

It localises to the secreted. Its function is as follows. Weakly inhibits 5HT3A receptors and Kv1.3/KCNA3 voltage-gated potassium channels. Agglutinates erythrocytes. The chain is U5-theraphotoxin-Hs1b 1 from Cyriopagopus schmidti (Chinese bird spider).